We begin with the raw amino-acid sequence, 1837 residues long: Zinc finger SWIM domain-containing protein 8 (1837 aa).

Phosphoserine is present on residues Ser36, Ser48, and Ser53. The tract at residues Arg45–Gly65 is disordered. Residues Thr55–Gly65 are compositionally biased toward gly residues. The SWIM-type zinc-finger motif lies at Tyr172 to Ile208. Phosphoserine is present on Ser437. Disordered regions lie at residues Ser514 to Asp727, Asn803 to Thr823, and Ser1016 to Gln1232. Basic and acidic residues-rich tracts occupy residues Gly523 to Arg532 and Leu566 to Leu575. Ser567 bears the Phosphoserine mark. Positions Gly579–Gly602 are enriched in gly residues. The span at His1019 to Ser1040 shows a compositional bias: polar residues. Gly residues predominate over residues Ser1119–Ser1130. Position 1139 is a phosphothreonine (Thr1139). Positions Ile1144 to Leu1159 are enriched in polar residues. Phosphoserine occurs at positions 1153, 1156, and 1160. Low complexity predominate over residues Gly1174–Ala1209. A compositionally biased stretch (basic and acidic residues) spans Lys1210–Ala1226. A Phosphoserine modification is found at Ser1267. 2 disordered regions span residues Ser1442–Gly1464 and Gln1635–Val1656. Gly residues predominate over residues Arg1447–Gly1464. Ser1836 carries the post-translational modification Phosphoserine.

The protein belongs to the ZSWIM8 family. As to quaternary structure, component of the SCF-like E3 ubiquitin-protein ligase complex which contains CUL3, RBX1, ELOB, ELOC and ZSWIM8. (Microbial infection) Interacts with Zika virus protein NS5; this interaction allows STAT2 binding and subsequent proteasomal degradation.

It is found in the cytoplasm. It localises to the cytosol. The protein operates within protein modification; protein ubiquitination. Substrate recognition component of a SCF-like E3 ubiquitin-protein ligase complex that promotes target-directed microRNA degradation (TDMD), a process that mediates degradation of microRNAs (miRNAs). The SCF-like E3 ubiquitin-protein ligase complex acts by catalyzing ubiquitination and subsequent degradation of AGO proteins (AGO1, AGO2, AGO3 and/or AGO4), thereby exposing miRNAs for degradation. Specifically recognizes and binds AGO proteins when they are engaged with a TDMD target. May also act as a regulator of axon guidance: specifically recognizes misfolded ROBO3 and promotes its ubiquitination and subsequent degradation. Plays an essential role for proper embryonic development of heart and lung. Controls protein quality of DAB1, a key signal molecule for brain development, thus protecting its signaling strength. Mechanistically, recognizes intrinsically disordered regions of DAB1 and eliminates misfolded DAB1 that cannot be properly phosphorylated. Its function is as follows. (Microbial infection) Participates in Zika virus inhibition of IFN signaling by acting as a scaffold protein to connect ZSWIM8/CUL3 ligase complex and STAT2, leading to STAT2 degradation. This is Zinc finger SWIM domain-containing protein 8 from Homo sapiens (Human).